The primary structure comprises 245 residues: 1-(5-phosphoribosyl)-5-[(5-phosphoribosylamino)methylideneamino] imidazole-4-carboxamide isomerase (245 aa).

The active-site Proton acceptor is aspartate 7. Catalysis depends on aspartate 129, which acts as the Proton donor.

This sequence belongs to the HisA/HisF family.

Its subcellular location is the cytoplasm. It catalyses the reaction 1-(5-phospho-beta-D-ribosyl)-5-[(5-phospho-beta-D-ribosylamino)methylideneamino]imidazole-4-carboxamide = 5-[(5-phospho-1-deoxy-D-ribulos-1-ylimino)methylamino]-1-(5-phospho-beta-D-ribosyl)imidazole-4-carboxamide. It functions in the pathway amino-acid biosynthesis; L-histidine biosynthesis; L-histidine from 5-phospho-alpha-D-ribose 1-diphosphate: step 4/9. This is 1-(5-phosphoribosyl)-5-[(5-phosphoribosylamino)methylideneamino] imidazole-4-carboxamide isomerase from Salmonella enteritidis PT4 (strain P125109).